Reading from the N-terminus, the 267-residue chain is 4-hydroxy-tetrahydrodipicolinate reductase (267 aa).

NAD(+) is bound at residue 10–15 (GANGRM). Residue Arg37 coordinates NADP(+). NAD(+) contacts are provided by residues 98–100 (GTT) and 122–125 (ARNY). The Proton donor/acceptor role is filled by His155. His156 is a binding site for (S)-2,3,4,5-tetrahydrodipicolinate. The active-site Proton donor is the Lys159. 165 to 166 (GT) lines the (S)-2,3,4,5-tetrahydrodipicolinate pocket.

It belongs to the DapB family.

The protein resides in the cytoplasm. It catalyses the reaction (S)-2,3,4,5-tetrahydrodipicolinate + NAD(+) + H2O = (2S,4S)-4-hydroxy-2,3,4,5-tetrahydrodipicolinate + NADH + H(+). The enzyme catalyses (S)-2,3,4,5-tetrahydrodipicolinate + NADP(+) + H2O = (2S,4S)-4-hydroxy-2,3,4,5-tetrahydrodipicolinate + NADPH + H(+). Its pathway is amino-acid biosynthesis; L-lysine biosynthesis via DAP pathway; (S)-tetrahydrodipicolinate from L-aspartate: step 4/4. In terms of biological role, catalyzes the conversion of 4-hydroxy-tetrahydrodipicolinate (HTPA) to tetrahydrodipicolinate. The chain is 4-hydroxy-tetrahydrodipicolinate reductase from Pseudoalteromonas translucida (strain TAC 125).